The chain runs to 394 residues: Flagellin A (394 aa).

Belongs to the bacterial flagellin family.

It localises to the secreted. Its subcellular location is the bacterial flagellum. Functionally, flagellin is the subunit protein which polymerizes to form the filaments of bacterial flagella. Homomer of FlaA is able to form a functional filament. The polypeptide is Flagellin A (flaA) (Rhizobium meliloti (strain 1021) (Ensifer meliloti)).